The primary structure comprises 423 residues: UDP-N-acetylglucosamine 1-carboxyvinyltransferase 1 (423 aa).

Lysine 23–asparagine 24 is a phosphoenolpyruvate binding site. Arginine 96 contacts UDP-N-acetyl-alpha-D-glucosamine. Cysteine 120 functions as the Proton donor in the catalytic mechanism. Cysteine 120 bears the 2-(S-cysteinyl)pyruvic acid O-phosphothioketal mark. Residues arginine 125–leucine 129, aspartate 309, and valine 331 contribute to the UDP-N-acetyl-alpha-D-glucosamine site.

Belongs to the EPSP synthase family. MurA subfamily.

It is found in the cytoplasm. It carries out the reaction phosphoenolpyruvate + UDP-N-acetyl-alpha-D-glucosamine = UDP-N-acetyl-3-O-(1-carboxyvinyl)-alpha-D-glucosamine + phosphate. It functions in the pathway cell wall biogenesis; peptidoglycan biosynthesis. Cell wall formation. Adds enolpyruvyl to UDP-N-acetylglucosamine. The polypeptide is UDP-N-acetylglucosamine 1-carboxyvinyltransferase 1 (Streptococcus thermophilus (strain CNRZ 1066)).